We begin with the raw amino-acid sequence, 863 residues long: Leucine--tRNA ligase (863 aa).

Residues 41–51 carry the 'HIGH' region motif; it reads PYPSGRIHIGH. A 'KMSKS' region motif is present at residues 627-631; it reads KMSKS. K630 provides a ligand contact to ATP.

The protein belongs to the class-I aminoacyl-tRNA synthetase family.

It localises to the cytoplasm. It catalyses the reaction tRNA(Leu) + L-leucine + ATP = L-leucyl-tRNA(Leu) + AMP + diphosphate. This Jannaschia sp. (strain CCS1) protein is Leucine--tRNA ligase.